Reading from the N-terminus, the 227-residue chain is Orotate phosphoribosyltransferase (227 aa).

Lys-26 lines the 5-phospho-alpha-D-ribose 1-diphosphate pocket. 34–35 lines the orotate pocket; the sequence is FF. 5-phospho-alpha-D-ribose 1-diphosphate-binding positions include 72–73, Arg-98, Lys-99, Lys-102, His-104, and 123–131; these read YK and DDVVSAGLS. Orotate contacts are provided by Ser-127 and Arg-155.

The protein belongs to the purine/pyrimidine phosphoribosyltransferase family. PyrE subfamily. As to quaternary structure, homodimer. It depends on Mg(2+) as a cofactor.

It catalyses the reaction orotidine 5'-phosphate + diphosphate = orotate + 5-phospho-alpha-D-ribose 1-diphosphate. It functions in the pathway pyrimidine metabolism; UMP biosynthesis via de novo pathway; UMP from orotate: step 1/2. Its function is as follows. Catalyzes the transfer of a ribosyl phosphate group from 5-phosphoribose 1-diphosphate to orotate, leading to the formation of orotidine monophosphate (OMP). This Nitrosomonas europaea (strain ATCC 19718 / CIP 103999 / KCTC 2705 / NBRC 14298) protein is Orotate phosphoribosyltransferase.